Here is a 253-residue protein sequence, read N- to C-terminus: Ras-like protein family member 11A-like (253 aa).

GTP is bound by residues 43–50, 90–97, and 157–160; these read GASNVGKT, DTPCVSLQ, and NKSD. The segment at 213–233 is disordered; sequence GNGEKRKGGLHLARPKSPNMQ.

Belongs to the small GTPase superfamily. Ras family.

The protein resides in the nucleus. It is found in the nucleolus. The catalysed reaction is GTP + H2O = GDP + phosphate + H(+). In terms of biological role, regulator of rDNA transcription. This chain is Ras-like protein family member 11A-like, found in Danio rerio (Zebrafish).